Here is a 62-residue protein sequence, read N- to C-terminus: Large ribosomal subunit protein uL29 (62 aa).

The protein belongs to the universal ribosomal protein uL29 family.

This Ruthia magnifica subsp. Calyptogena magnifica protein is Large ribosomal subunit protein uL29.